Here is a 309-residue protein sequence, read N- to C-terminus: Serine/threonine-protein phosphatase 2A catalytic subunit beta isoform (309 aa).

Positions 57, 59, 85, and 117 each coordinate Mn(2+). H118 (proton donor) is an active-site residue. The Mn(2+) site is built by H167 and H241. Residue Y307 is modified to Phosphotyrosine. A Leucine methyl ester modification is found at L309.

This sequence belongs to the PPP phosphatase family. PP-1 subfamily. In terms of assembly, found in a complex with at least ARL2, PPP2CB, PPP2R1A, PPP2R2A, PPP2R5E and TBCD. Interacts with TBCD. PP2A consists of a common heterodimeric core enzyme (composed of a 36 kDa catalytic subunit (subunit C) and a 65 kDa constant regulatory subunit (PR65) (subunit A)) that associates with a variety of regulatory subunits. Proteins that associate with the core dimer include three families of regulatory subunits B (the R2/B/PR55/B55, R3/B''/PR72/PR130/PR59 and R5/B'/B56 families), the 48 kDa variable regulatory subunit, viral proteins, and cell signaling molecules. Binds PPME1. May indirectly interact with SGO1, most probably through regulatory B56 subunits. Interacts with CTTNBP2NL. Interacts with PTPA. Part of the core of STRIPAK complexes composed of PP2A catalytic and scaffolding subunits, the striatins (PP2A regulatory subunits), the striatin-associated proteins MOB4, STRIP1 and STRIP2, PDCD10 and members of the STE20 kinases, such as STK24 and STK26. Mn(2+) is required as a cofactor. Reversibly methyl esterified on Leu-309 by leucine carboxyl methyltransferase 1 (Lcmt1) and protein phosphatase methylesterase 1 (PPME1). Carboxyl methylation influences the affinity of the catalytic subunit for the different regulatory subunits, thereby modulating the PP2A holoenzyme's substrate specificity, enzyme activity and cellular localization. Post-translationally, phosphorylation of either threonine (by autophosphorylation-activated protein kinase) or tyrosine results in inactivation of the phosphatase. Auto-dephosphorylation has been suggested as a mechanism for reactivation. In terms of processing, may be monoubiquitinated by NOSIP.

Its subcellular location is the cytoplasm. The protein resides in the nucleus. It is found in the chromosome. It localises to the centromere. The protein localises to the cytoskeleton. Its subcellular location is the spindle pole. The enzyme catalyses O-phospho-L-seryl-[protein] + H2O = L-seryl-[protein] + phosphate. The catalysed reaction is O-phospho-L-threonyl-[protein] + H2O = L-threonyl-[protein] + phosphate. In terms of biological role, catalytic subunit of protein phosphatase 2A (PP2A), a serine/threonine phosphatase involved in the regulation of a wide variety of enzymes, signal transduction pathways, and cellular events. PP2A can modulate the activity of phosphorylase B kinase, casein kinase 2, mitogen-stimulated S6 kinase, and MAP-2 kinase. Part of the striatin-interacting phosphatase and kinase (STRIPAK) complexes. STRIPAK complexes have critical roles in protein (de)phosphorylation and are regulators of multiple signaling pathways including Hippo, MAPK, nuclear receptor and cytoskeleton remodeling. Different types of STRIPAK complexes are involved in a variety of biological processes such as cell growth, differentiation, apoptosis, metabolism and immune regulation. The polypeptide is Serine/threonine-protein phosphatase 2A catalytic subunit beta isoform (PPP2CB) (Oryctolagus cuniculus (Rabbit)).